Consider the following 444-residue polypeptide: Jacalin-related lectin 42 (444 aa).

Ala2 carries the N-acetylalanine modification. Jacalin-type lectin domains lie at 2–143, 146–289, and 297–441; these read ALMV…YYIR, ATKS…YYAP, and TEKL…HVIP.

The protein belongs to the jacalin lectin family.

The chain is Jacalin-related lectin 42 (JAL42) from Arabidopsis thaliana (Mouse-ear cress).